The chain runs to 473 residues: Photosystem II CP43 reaction center protein (473 aa).

Positions Met1 to Glu14 are excised as a propeptide. An N-acetylthreonine modification is found at Thr15. Thr15 carries the post-translational modification Phosphothreonine. Transmembrane regions (helical) follow at residues Leu69–Ala93, Leu134–Asn155, Lys178–Thr200, Lys255–Ser275, and Trp291–Ala312. A [CaMn4O5] cluster-binding site is contributed by Glu367. The chain crosses the membrane as a helical span at residues Arg447–Pro471.

This sequence belongs to the PsbB/PsbC family. PsbC subfamily. In terms of assembly, PSII is composed of 1 copy each of membrane proteins PsbA, PsbB, PsbC, PsbD, PsbE, PsbF, PsbH, PsbI, PsbJ, PsbK, PsbL, PsbM, PsbT, PsbX, PsbY, PsbZ, Psb30/Ycf12, at least 3 peripheral proteins of the oxygen-evolving complex and a large number of cofactors. It forms dimeric complexes. Binds multiple chlorophylls and provides some of the ligands for the Ca-4Mn-5O cluster of the oxygen-evolving complex. It may also provide a ligand for a Cl- that is required for oxygen evolution. PSII binds additional chlorophylls, carotenoids and specific lipids. is required as a cofactor.

Its subcellular location is the plastid. The protein resides in the chloroplast thylakoid membrane. Functionally, one of the components of the core complex of photosystem II (PSII). It binds chlorophyll and helps catalyze the primary light-induced photochemical processes of PSII. PSII is a light-driven water:plastoquinone oxidoreductase, using light energy to abstract electrons from H(2)O, generating O(2) and a proton gradient subsequently used for ATP formation. The chain is Photosystem II CP43 reaction center protein from Arabis hirsuta (Hairy rock-cress).